We begin with the raw amino-acid sequence, 236 residues long: Lipoprotein B (236 aa).

An N-terminal signal peptide occupies residues 1-27; that stretch reads MNKKYFKKYSSILIFSMSILAPMTLAS. Residue cysteine 28 is the site of N-palmitoyl cysteine attachment. Residue cysteine 28 is the site of S-diacylglycerol cysteine attachment. 2 disordered regions span residues 35–112 and 134–236; these read EKDK…KSNV and SEKQ…GDAF. Positions 43–60 are enriched in polar residues; it reads STNLSEPNKSNTSKTNTF. Positions 61–74 are enriched in basic and acidic residues; it reads QDKKDSTNKIDSQE. Composition is skewed to polar residues over residues 75 to 112 and 143 to 157; these read SSKTQSQNTSESNQNTKVDSSKTNNLATNQNNPSKSNV and NASSLNSKQINNTLK. Residues 158–175 are compositionally biased toward basic and acidic residues; the sequence is NQDKTKQENDQFKQESKD. Residues 193 to 212 are compositionally biased toward polar residues; it reads VISSQSTTRLEMPKNDQSNS. Positions 215–228 are enriched in basic and acidic residues; sequence EDNKKSPESPKWWE.

It belongs to the M.pulmonis LipAB lipoprotein family.

It localises to the cell membrane. The protein is Lipoprotein B (lipB) of Mycoplasmopsis pulmonis (strain UAB CTIP) (Mycoplasma pulmonis).